Reading from the N-terminus, the 345-residue chain is uncharacterized protein (345 aa).

Positions 1–198 (MDVLSAVLLA…LSEGLLDHEE (198 aa)) constitute a CNNM transmembrane domain. 2 consecutive transmembrane segments (helical) span residues 3 to 23 (VLSA…FVGA) and 95 to 115 (VPPA…HVLL). CBS domains follow at residues 217-280 (AVPL…PQTV) and 285-342 (VVRP…MRDG). The chain crosses the membrane as a helical span at residues 312 to 332 (LALVTADNGSVVGMVALEDVV).

It belongs to the TerC family.

It is found in the cell membrane. This is an uncharacterized protein from Mycobacterium tuberculosis (strain ATCC 25618 / H37Rv).